A 370-amino-acid polypeptide reads, in one-letter code: Cap-specific mRNA (nucleoside-2'-O-)-methyltransferase 1 (370 aa).

The RrmJ-type SAM-dependent 2'-O-MTase domain occupies alanine 87–isoleucine 294. Positions 130 and 207 each coordinate S-adenosyl-L-methionine. Lysine 248 serves as the catalytic Proton acceptor.

As to quaternary structure, component of a complex composed of CBF5, GAR1, NHP2, MTR1, NOP10 and Tb11.01.8210.

Its subcellular location is the nucleus. The catalysed reaction is a 5'-end (N(7)-methyl 5'-triphosphoguanosine)-ribonucleoside in mRNA + S-adenosyl-L-methionine = a 5'-end (N(7)-methyl 5'-triphosphoguanosine)-(2'-O-methyl-ribonucleoside) in mRNA + S-adenosyl-L-homocysteine + H(+). Its function is as follows. S-adenosyl-L-methionine-dependent methyltransferase that mediates RNA cap1 2'-O-ribose methylation to the 5'-cap structure of spliced leader and U1 small nuclear RNAs. Methylates the ribose of the first nucleotide of a m(7)GpppG-capped RNA to produce m(7)GpppNmp (cap1). Cap1 modification is linked to higher levels of translation. Recognizes a guanosine cap on RNA independent of its N(7) methylation status. The protein is Cap-specific mRNA (nucleoside-2'-O-)-methyltransferase 1 (MTR1) of Trypanosoma brucei brucei (strain 927/4 GUTat10.1).